The primary structure comprises 142 residues: HTH-type transcriptional regulator MntR (142 aa).

In terms of domain architecture, HTH dtxR-type spans 1–63 (MPTPSMEDYI…YEKYRGLVLT (63 aa)). 6 residues coordinate Mn(2+): aspartate 8, glutamate 11, histidine 77, glutamate 99, glutamate 102, and histidine 103.

It belongs to the DtxR/MntR family. As to quaternary structure, homodimer.

The protein resides in the cytoplasm. Its activity is regulated as follows. DNA binding is strongly activated by Mn(2+). Functionally, central regulator of manganese homeostasis. In Bacillus cereus (strain ATCC 14579 / DSM 31 / CCUG 7414 / JCM 2152 / NBRC 15305 / NCIMB 9373 / NCTC 2599 / NRRL B-3711), this protein is HTH-type transcriptional regulator MntR.